A 467-amino-acid polypeptide reads, in one-letter code: AYNALAPKGAPNSCEWEQEEPTQEMAGELEDEEEAEEEEAEEEAEAPQAGQKVKKTHVYAQAPLAGEKITANGLQIVSDTQTEGNPVFADPTYQPEPQVGESQWNEAEATAIGGRVLKKTTPMKPCYGSYARPTNKNGGQGILVANNQGALESKVEMQFFAPSGTAMNERNAVQPSIVLYSEDVNMETPDTHISYKPSKTDENSKAMLGQQAMPNRPNYIAFRDNFIGLMYYNSTGNMGVLAGQASQLNAVVDLQDRNTELSYQLLLDSIGDRTRYFSMWNQAVDSYDPDVRIIENHGTEDELPNYCFPLGGIGVTDTYQGIKSNGNGNPQNWTKNDDFAARNEIGVGNNFALEINLNANLWRNFLYSNIALYLPDKLKYTPTNVEISPNPNSYDYMNKRVVAPGLVDCYINLGARWSLDYMENVNPFNHHRNAGLRYRSMLLGNGRYVPFHIQVPQKFFAIKNLLL.

The tract at residues 1 to 54 is disordered; that stretch reads AYNALAPKGAPNSCEWEQEEPTQEMAGELEDEEEAEEEEAEEEAEAPQAGQKVK. Acidic residues predominate over residues 16 to 45; sequence WEQEEPTQEMAGELEDEEEAEEEEAEEEAE.

This sequence belongs to the adenoviridae hexon protein family. As to quaternary structure, homotrimer. Interacts with the capsid vertex protein; this interaction binds the peripentonal hexons to the neighboring penton base. Interacts with the hexon-linking protein; this interaction tethers the hexons surrounding the penton to those situated in the central plate of the facet. Interacts with the hexon-interlacing protein; this interaction lashes the hexons together. Interacts with host dyneins DYNC1LI1 and DYNC1I2; this interaction might be involved in intracellular microtubule-dependent transport of incoming viral capsid. Interacts with the shutoff protein; this interaction allows folding and formation of hexons trimers. Interacts with pre-protein VI; this interaction probably allows nuclear import of hexon trimers and possibly pre-capsid assembly.

The protein localises to the virion. The protein resides in the host nucleus. Major capsid protein that self-associates to form 240 hexon trimers, each in the shape of a hexagon, building most of the pseudo T=25 capsid. Assembled into trimeric units with the help of the chaperone shutoff protein. Transported by pre-protein VI to the nucleus where it associates with other structural proteins to form an empty capsid. Might be involved, through its interaction with host dyneins, in the intracellular microtubule-dependent transport of incoming viral capsid to the nucleus. This Homo sapiens (Human) protein is Hexon protein.